A 450-amino-acid polypeptide reads, in one-letter code: Transcription factor SCREAM2 (450 aa).

Disordered regions lie at residues 1 to 47 (MNSD…NQND), 207 to 231 (RQSS…YERE), and 244 to 265 (GLNY…KGMP). The span at 209–220 (SSSSKMCNSESS) shows a compositional bias: low complexity. Basic and acidic residues predominate over residues 221-230 (SEMRKSSYER). The bHLH domain occupies 263-312 (GMPAKNLMAERRRRKKLNDRLYMLRSVVPKISKMDRASILGDAIDYLKEL). The ACT domain occupies 378–450 (NIHMFCGRRP…LDTAGYAGLV (73 aa)).

As to quaternary structure, homodimer. Heterodimers with SPCH, MUTE, and FAMA. In terms of tissue distribution, expressed constitutively in roots, leaves, stems, and flowers. Broad expression within stomatal cell lineages of leaf epidermis, except in mature guard-cells.

The protein localises to the nucleus. In terms of biological role, mediates stomatal differentiation in the epidermis probably by controlling successive roles of SPCH, MUTE, and FAMA. Functions as a dimer with SPCH during stomatal initiation. This chain is Transcription factor SCREAM2 (SCRM2), found in Arabidopsis thaliana (Mouse-ear cress).